Reading from the N-terminus, the 270-residue chain is Interleukin-2 receptor subunit alpha (270 aa).

The signal sequence occupies residues 1–21 (MEPSLLMWGFFTFTMIPGCMA). Residues 22-84 (GACVQQPPSL…FWENKCQCMP (63 aa)) enclose the Sushi 1 domain. Residues 22–245 (GACVQQPPSL…QPIIFTTQYQ (224 aa)) are Extracellular-facing. 3 disulfide bridges follow: Cys24–Cys67, Cys49–Cys80, and Cys51–Cys82. Residues Asn33 and Asn70 are each glycosylated (N-linked (GlcNAc...) asparagine). The disordered stretch occupies residues 87–124 (SPRIPVKQVTPRPEEQKERKTTETQGQMQPPNQANLPG). A compositionally biased stretch (basic and acidic residues) spans 98 to 108 (RPEEQKERKTT). A compositionally biased stretch (polar residues) spans 112–121 (GQMQPPNQAN). Residues 124 to 191 (GHCKEPPPWE…WTQPKLKCKS (68 aa)) enclose the Sushi 2 domain. 2 cysteine pairs are disulfide-bonded: Cys126-Cys171 and Cys153-Cys189. 2 N-linked (GlcNAc...) asparagine glycosylation sites follow: Asn164 and Asn195. Residues 190 to 225 (KSEKENGSFPEPQMSTAAPPTTKTSLPTRTKGTTDS) are disordered. The span at 202–225 (QMSTAAPPTTKTSLPTRTKGTTDS) shows a compositional bias: polar residues. The N-linked (GlcNAc...) asparagine glycan is linked to Asn227. The helical transmembrane segment at 246-264 (LAVAGCVLLLLSILLLSGL) threads the bilayer. Topologically, residues 265–270 (TWQRRR) are cytoplasmic.

In terms of assembly, non-covalent dimer of an alpha and a beta subunit. IL2R exists in 3 different forms: a high affinity dimer, an intermediate affinity monomer (beta subunit), and a low affinity monomer (alpha subunit). The high and intermediate affinity forms also associate with a gamma subunit.

The protein localises to the membrane. Its function is as follows. Receptor for interleukin-2. The receptor is involved in the regulation of immune tolerance by controlling regulatory T cells (TREGs) activity. TREGs suppress the activation and expansion of autoreactive T-cells. The protein is Interleukin-2 receptor subunit alpha (IL2RA) of Sus scrofa (Pig).